Here is a 541-residue protein sequence, read N- to C-terminus: Chaperonin GroEL (541 aa).

Residues 29-32, 86-90, G413, and D494 contribute to the ATP site; these read TIGP and DGTTT.

It belongs to the chaperonin (HSP60) family. As to quaternary structure, forms a cylinder of 14 subunits composed of two heptameric rings stacked back-to-back. Interacts with the co-chaperonin GroES.

Its subcellular location is the cytoplasm. The enzyme catalyses ATP + H2O + a folded polypeptide = ADP + phosphate + an unfolded polypeptide.. Together with its co-chaperonin GroES, plays an essential role in assisting protein folding. The GroEL-GroES system forms a nano-cage that allows encapsulation of the non-native substrate proteins and provides a physical environment optimized to promote and accelerate protein folding. This Lachnospira eligens (strain ATCC 27750 / DSM 3376 / VPI C15-48 / C15-B4) (Eubacterium eligens) protein is Chaperonin GroEL.